The primary structure comprises 685 residues: Kinesin-related protein 11 (685 aa).

The 402-residue stretch at 4–405 (NISVSVRARP…LKFASRAKKI (402 aa)) folds into the Kinesin motor domain. Residues 36 to 105 (TSLPPPITQP…TTVPASPAPT (70 aa)) are disordered. The span at 47 to 105 (SSLPPISTPIKSSSSSSTSTSAGSLKTPLKTPLKTPLKTPLKTNSTTTNTTVPASPAPT) shows a compositional bias: low complexity. 156–163 (GITSSGKT) provides a ligand contact to ATP. Residues 411–488 (VNEILDDKAL…KINNLNKLIL (78 aa)) are a coiled coil. The disordered stretch occupies residues 495–568 (NSASKGGSGS…QSTSSLTIGG (74 aa)). Residues 511-520 (RSTFVSPSQN) show a composition bias toward polar residues. The segment covering 533–565 (PNSFSNLLLQSPSQNNNNNSHISPLSQSTSSLT) has biased composition (low complexity). Residues 574-683 (FESNELIQIQ…LKSKIQEYEV (110 aa)) adopt a coiled-coil conformation.

It belongs to the TRAFAC class myosin-kinesin ATPase superfamily. Kinesin family.

It localises to the cytoplasm. It is found in the cytoskeleton. Functionally, microtubule-associated force-producing protein that plays a role in organelle transport. Its motor activity is directed toward the microtubule's plus end. This is Kinesin-related protein 11 (kif11) from Dictyostelium discoideum (Social amoeba).